Consider the following 187-residue polypeptide: Elongation factor P (187 aa).

The protein belongs to the elongation factor P family.

It localises to the cytoplasm. It functions in the pathway protein biosynthesis; polypeptide chain elongation. Functionally, involved in peptide bond synthesis. Stimulates efficient translation and peptide-bond synthesis on native or reconstituted 70S ribosomes in vitro. Probably functions indirectly by altering the affinity of the ribosome for aminoacyl-tRNA, thus increasing their reactivity as acceptors for peptidyl transferase. The sequence is that of Elongation factor P from Mycobacterium ulcerans (strain Agy99).